A 354-amino-acid polypeptide reads, in one-letter code: Histidinol-phosphate aminotransferase (354 aa).

K210 carries the post-translational modification N6-(pyridoxal phosphate)lysine.

It belongs to the class-II pyridoxal-phosphate-dependent aminotransferase family. Histidinol-phosphate aminotransferase subfamily. Homodimer. The cofactor is pyridoxal 5'-phosphate.

It catalyses the reaction L-histidinol phosphate + 2-oxoglutarate = 3-(imidazol-4-yl)-2-oxopropyl phosphate + L-glutamate. It participates in amino-acid biosynthesis; L-histidine biosynthesis; L-histidine from 5-phospho-alpha-D-ribose 1-diphosphate: step 7/9. The polypeptide is Histidinol-phosphate aminotransferase (Clostridium botulinum (strain Kyoto / Type A2)).